The primary structure comprises 699 residues: Polyribonucleotide nucleotidyltransferase (699 aa).

Mg(2+) contacts are provided by Asp485 and Asp491. The KH domain occupies 552–611 (PRITTIKINPEKIRDVIGKGGAVIRALTEETGTTIELEDDGTVKIASSNGDATREAIRRI). One can recognise an S1 motif domain in the interval 621–689 (GRIYNGKVIR…RQGRVRLSIK (69 aa)).

This sequence belongs to the polyribonucleotide nucleotidyltransferase family. As to quaternary structure, component of the RNA degradosome, which is a multiprotein complex involved in RNA processing and mRNA degradation. It depends on Mg(2+) as a cofactor.

The protein localises to the cytoplasm. The catalysed reaction is RNA(n+1) + phosphate = RNA(n) + a ribonucleoside 5'-diphosphate. In terms of biological role, involved in mRNA degradation. Catalyzes the phosphorolysis of single-stranded polyribonucleotides processively in the 3'- to 5'-direction. This Shewanella sp. (strain ANA-3) protein is Polyribonucleotide nucleotidyltransferase.